A 324-amino-acid polypeptide reads, in one-letter code: Probable tRNA pseudouridine synthase B (324 aa).

The active-site Nucleophile is D72. In terms of domain architecture, PUA spans 239–314 (LPRVVILDSA…LVIETRKVFM (76 aa)).

The protein belongs to the pseudouridine synthase TruB family. Type 2 subfamily.

It catalyses the reaction uridine(55) in tRNA = pseudouridine(55) in tRNA. Could be responsible for synthesis of pseudouridine from uracil-55 in the psi GC loop of transfer RNAs. This is Probable tRNA pseudouridine synthase B from Methanothermobacter thermautotrophicus (strain ATCC 29096 / DSM 1053 / JCM 10044 / NBRC 100330 / Delta H) (Methanobacterium thermoautotrophicum).